A 307-amino-acid polypeptide reads, in one-letter code: Heparan sulfate glucosamine 3-O-sulfotransferase 1 (307 aa).

Residues 1 to 20 (MAALLLGAVLLVAQPQLVPS) form the signal peptide. N-linked (GlcNAc...) asparagine glycosylation occurs at asparagine 48. 3'-phosphoadenylyl sulfate is bound by residues 64 to 68 (KGGTR), arginine 147, and serine 155. N-linked (GlcNAc...) asparagine glycans are attached at residues asparagine 192, asparagine 242, and asparagine 249. Residue tyrosine 255 coordinates 3'-phosphoadenylyl sulfate. Cysteine 256 and cysteine 265 are disulfide-bonded. 270–274 (KGRAH) is a binding site for 3'-phosphoadenylyl sulfate.

It belongs to the sulfotransferase 1 family. Highly expressed in the brain and kidney and weakly expressed in the heart, lung and placenta.

The protein resides in the golgi apparatus lumen. It carries out the reaction alpha-D-glucosaminyl-[heparan sulfate](n) + 3'-phosphoadenylyl sulfate = 3-sulfo-alpha-D-glucosaminyl-[heparan sulfate](n) + adenosine 3',5'-bisphosphate + H(+). Its function is as follows. Sulfotransferase that utilizes 3'-phospho-5'-adenylyl sulfate (PAPS) to catalyze the transfer of a sulfo group to position 3 of glucosamine residues in heparan. Catalyzes the rate limiting step in the biosynthesis of heparan sulfate (HSact). This modification is a crucial step in the biosynthesis of anticoagulant heparan sulfate as it completes the structure of the antithrombin pentasaccharide binding site. This Homo sapiens (Human) protein is Heparan sulfate glucosamine 3-O-sulfotransferase 1 (HS3ST1).